A 500-amino-acid chain; its full sequence is Taxoid 7-beta-hydroxylase (500 aa).

A helical membrane pass occupies residues 24-44; that stretch reads PAILSTALTAIAGIIVLLVIT. Cys446 provides a ligand contact to heme.

The protein belongs to the cytochrome P450 family.

The protein resides in the microsome membrane. It catalyses the reaction taxusin + reduced [NADPH--hemoprotein reductase] + O2 = 7beta-hydroxytaxusin + oxidized [NADPH--hemoprotein reductase] + H2O + H(+). The enzyme catalyses 2alpha-hydroxytaxusin + reduced [NADPH--hemoprotein reductase] + O2 = 2alpha,7beta-dihydroxytaxusin + oxidized [NADPH--hemoprotein reductase] + H2O + H(+). The catalysed reaction is 7beta-hydroxytaxusin + reduced [NADPH--hemoprotein reductase] + O2 = 2alpha,7beta-dihydroxytaxusin + oxidized [NADPH--hemoprotein reductase] + H2O + H(+). It participates in alkaloid biosynthesis; taxol biosynthesis. Catalyzes the conversion of taxusin to 7-beta-hydroxytaxusin in taxol biosynthesis. Catalyzes the conversion of 2-alpha-hydroxytaxusin to 2-alpha-7-beta-hydroxytaxusin in taxol biosynthesis. The protein is Taxoid 7-beta-hydroxylase of Taxus cuspidata (Japanese yew).